A 651-amino-acid chain; its full sequence is LysM domain receptor-like kinase 3 (651 aa).

The signal sequence occupies residues 1–19; the sequence is MNLTFYIFFLSLLPSFSSS. N-linked (GlcNAc...) asparagine glycosylation is found at Asn-2, Asn-23, Asn-42, Asn-73, Asn-86, Asn-100, Asn-114, and Asn-177. At 20–236 the chain is on the extracellular side; the sequence is KPMNCSDTTR…TAKSGSHVPY (217 aa). Cystine bridges form between Cys-24-Cys-76, Cys-31-Cys-133, and Cys-74-Cys-131. Residues 142–186 enclose the LysM domain; it reads MSYVAMAGDSVQSLSSRFGVSMDRIEDVNGILNLDNITAGDLLYI. The tract at residues 196–216 is disordered; it reads YETSKINPPAPSPAPASSLAN. N-linked (GlcNAc...) asparagine glycosylation is found at Asn-218 and Asn-225. Residues 237–257 traverse the membrane as a helical segment; sequence IWIVGGLGVVLALLVLCILVC. The Cytoplasmic portion of the chain corresponds to 258–651; sequence ICLRSSSCSS…QVFSGLVQGR (394 aa). Thr-330 carries the post-translational modification Phosphothreonine. One can recognise a Protein kinase domain in the interval 341-628; sequence FSDSNLLGHG…VVISLSQILL (288 aa). ATP is bound by residues 347–355 and Lys-368; that span reads LGHGNYGSV. At Tyr-410 the chain carries Phosphotyrosine. Catalysis depends on Asp-464, which acts as the Proton acceptor. Position 468 is a phosphoserine (Ser-468). A phosphothreonine mark is found at Thr-500 and Thr-505. Residue Tyr-513 is modified to Phosphotyrosine.

It belongs to the protein kinase superfamily. Ser/Thr protein kinase family.

The protein localises to the cell membrane. In terms of biological role, putative Lysin motif (LysM) receptor kinase that may recognize microbe-derived N-acetylglucosamine (NAG)-containing ligands. The chain is LysM domain receptor-like kinase 3 (LYK3) from Arabidopsis thaliana (Mouse-ear cress).